Here is a 414-residue protein sequence, read N- to C-terminus: 25-hydroxycholesterol 7-alpha-hydroxylase (414 aa).

Cysteine 354 is a heme binding site.

It belongs to the cytochrome P450 family. Heme is required as a cofactor. Highly expressed in brain; also expressed in liver and kidney.

It is found in the endoplasmic reticulum membrane. The protein resides in the microsome membrane. It catalyses the reaction 25-hydroxycholesterol + reduced [NADPH--hemoprotein reductase] + O2 = 7alpha,25-dihydroxycholesterol + oxidized [NADPH--hemoprotein reductase] + H2O + H(+). The enzyme catalyses (25R)-cholest-5-ene-3beta,26-diol + reduced [NADPH--hemoprotein reductase] + O2 = (25R)-cholest-5-en-3beta,7alpha,26-triol + oxidized [NADPH--hemoprotein reductase] + H2O + H(+). The protein operates within lipid metabolism; bile acid biosynthesis. Its function is as follows. Oxysterol 7alpha-hydroxylase that mediates formation of 7-alpha,25-dihydroxycholesterol (7-alpha,25-OHC) from 25-hydroxycholesterol. Plays a key role in cell positioning and movement in lymphoid tissues: 7-alpha,25-dihydroxycholesterol (7-alpha,25-OHC) acts as a ligand for the G protein-coupled receptor GPR183/EBI2, a chemotactic receptor for a number of lymphoid cells. The sequence is that of 25-hydroxycholesterol 7-alpha-hydroxylase (Cyp7b1) from Rattus norvegicus (Rat).